We begin with the raw amino-acid sequence, 139 residues long: D-ribose pyranase (139 aa).

Catalysis depends on histidine 20, which acts as the Proton donor. Substrate-binding positions include aspartate 28, histidine 106, and 128 to 130; that span reads YAN.

Belongs to the RbsD / FucU family. RbsD subfamily. As to quaternary structure, homodecamer.

The protein resides in the cytoplasm. The enzyme catalyses beta-D-ribopyranose = beta-D-ribofuranose. It participates in carbohydrate metabolism; D-ribose degradation; D-ribose 5-phosphate from beta-D-ribopyranose: step 1/2. In terms of biological role, catalyzes the interconversion of beta-pyran and beta-furan forms of D-ribose. This chain is D-ribose pyranase, found in Pectobacterium atrosepticum (strain SCRI 1043 / ATCC BAA-672) (Erwinia carotovora subsp. atroseptica).